Reading from the N-terminus, the 349-residue chain is Phosphate acyltransferase (349 aa).

It belongs to the PlsX family. In terms of assembly, homodimer. Probably interacts with PlsY.

Its subcellular location is the cytoplasm. It catalyses the reaction a fatty acyl-[ACP] + phosphate = an acyl phosphate + holo-[ACP]. Its pathway is lipid metabolism; phospholipid metabolism. In terms of biological role, catalyzes the reversible formation of acyl-phosphate (acyl-PO(4)) from acyl-[acyl-carrier-protein] (acyl-ACP). This enzyme utilizes acyl-ACP as fatty acyl donor, but not acyl-CoA. The protein is Phosphate acyltransferase of Rhodopseudomonas palustris (strain BisA53).